Here is a 311-residue protein sequence, read N- to C-terminus: Catechol 1,2-dioxygenase (311 aa).

Tyrosine 164 contributes to the catechol binding site. Positions 164, 200, 224, and 226 each coordinate Fe cation. Residue 224 to 226 (HIH) coordinates catechol.

Belongs to the intradiol ring-cleavage dioxygenase family. Homodimer. Fe(3+) is required as a cofactor.

The catalysed reaction is catechol + O2 = cis,cis-muconate + 2 H(+). The protein operates within aromatic compound metabolism; beta-ketoadipate pathway; 5-oxo-4,5-dihydro-2-furylacetate from catechol: step 1/3. This chain is Catechol 1,2-dioxygenase, found in Acinetobacter baylyi (strain ATCC 33305 / BD413 / ADP1).